Here is an 844-residue protein sequence, read N- to C-terminus: Putative ubiquitin thioesterase 232R (844 aa).

Disordered stretches follow at residues 136–223 (NSST…DEAE), 261–287 (SRRK…PPME), 326–377 (LLNG…PELT), and 422–541 (QKKQ…KLSV). Over residues 137 to 216 (SSTRSRSPSV…PSRQSVRQSS (80 aa)) the composition is skewed to low complexity. 2 stretches are compositionally biased toward low complexity: residues 332–341 (RPSPSLPQSR) and 354–364 (RSPSVGSPSVR). The span at 429–438 (SPSPTPPSPV) shows a compositional bias: pro residues. Basic and acidic residues predominate over residues 472–485 (VQKKMGKSGEREPK). Positions 504-518 (SLRSRLSTQQQTQQS) are enriched in low complexity. Residues 526 to 535 (ESIKPEESVR) show a composition bias toward basic and acidic residues. The OTU domain occupies 590 to 725 (YTVKQVSGDG…NYHYTSLVPI (136 aa)). The active site involves aspartate 598. The active-site Nucleophile is the cysteine 601. Residue histidine 718 is part of the active site.

It carries out the reaction Thiol-dependent hydrolysis of ester, thioester, amide, peptide and isopeptide bonds formed by the C-terminal Gly of ubiquitin (a 76-residue protein attached to proteins as an intracellular targeting signal).. In terms of biological role, hydrolase that can remove conjugated ubiquitin from proteins and may therefore play an important regulatory role at the level of protein turnover by preventing degradation. The chain is Putative ubiquitin thioesterase 232R from Aedes vexans (Inland floodwater mosquito).